A 332-amino-acid chain; its full sequence is Phosphate acyltransferase (332 aa).

This sequence belongs to the PlsX family. In terms of assembly, homodimer. Probably interacts with PlsY.

The protein localises to the cytoplasm. The enzyme catalyses a fatty acyl-[ACP] + phosphate = an acyl phosphate + holo-[ACP]. Its pathway is lipid metabolism; phospholipid metabolism. In terms of biological role, catalyzes the reversible formation of acyl-phosphate (acyl-PO(4)) from acyl-[acyl-carrier-protein] (acyl-ACP). This enzyme utilizes acyl-ACP as fatty acyl donor, but not acyl-CoA. This chain is Phosphate acyltransferase, found in Bacillus pumilus (strain SAFR-032).